We begin with the raw amino-acid sequence, 217 residues long: MGMVITIDGPAASGKSSVSRELARRLGWQWVSTGAFYRGLAFAALQLQIDLDDVSTLASLTHDPVWSVKMDDERTRVFFKDQDVTDQIAHEDVGNFASKVSHYPEVRKALLDAQRNCSAGPQGLVAEGRDCGTVVFPTAEAKVYLTANSEHRAARRAAELGLDHEDMVKAQQQRDLQDSTRKVAPMAVPEDALVVDTTALNLNQVVDAVVEYVKNKI.

Glycine 9–serine 17 is an ATP binding site.

The protein belongs to the cytidylate kinase family. Type 1 subfamily.

The protein localises to the cytoplasm. The enzyme catalyses CMP + ATP = CDP + ADP. It catalyses the reaction dCMP + ATP = dCDP + ADP. The sequence is that of Cytidylate kinase from Bdellovibrio bacteriovorus (strain ATCC 15356 / DSM 50701 / NCIMB 9529 / HD100).